The following is a 239-amino-acid chain: Ribonuclease 3 (239 aa).

One can recognise an RNase III domain in the interval 12-137; the sequence is RLTLEAAIGH…LIAALYLDGG (126 aa). Residue Glu50 participates in Mg(2+) binding. Residue Asp54 is part of the active site. Residues Asp123 and Glu126 each coordinate Mg(2+). Glu126 is an active-site residue. One can recognise a DRBM domain in the interval 162-231; it reads DAKTELQEWA…ATRILEREGI (70 aa).

Belongs to the ribonuclease III family. Homodimer. Requires Mg(2+) as cofactor.

It localises to the cytoplasm. The enzyme catalyses Endonucleolytic cleavage to 5'-phosphomonoester.. Functionally, digests double-stranded RNA. Involved in the processing of primary rRNA transcript to yield the immediate precursors to the large and small rRNAs (23S and 16S). Processes some mRNAs, and tRNAs when they are encoded in the rRNA operon. Processes pre-crRNA and tracrRNA of type II CRISPR loci if present in the organism. This is Ribonuclease 3 from Rhizobium rhizogenes (strain K84 / ATCC BAA-868) (Agrobacterium radiobacter).